Here is a 194-residue protein sequence, read N- to C-terminus: Nucleoside triphosphate pyrophosphatase (194 aa).

The active-site Proton acceptor is the D71.

It belongs to the Maf family. It depends on a divalent metal cation as a cofactor.

It is found in the cytoplasm. The catalysed reaction is a ribonucleoside 5'-triphosphate + H2O = a ribonucleoside 5'-phosphate + diphosphate + H(+). It catalyses the reaction a 2'-deoxyribonucleoside 5'-triphosphate + H2O = a 2'-deoxyribonucleoside 5'-phosphate + diphosphate + H(+). Its function is as follows. Nucleoside triphosphate pyrophosphatase. May have a dual role in cell division arrest and in preventing the incorporation of modified nucleotides into cellular nucleic acids. The polypeptide is Nucleoside triphosphate pyrophosphatase (Paramagnetospirillum magneticum (strain ATCC 700264 / AMB-1) (Magnetospirillum magneticum)).